Reading from the N-terminus, the 455-residue chain is UDP-glycosyltransferase 75B2 (455 aa).

The Proton acceptor role is filled by H16. Residue H16 participates in an anthocyanidin binding. The UDP-alpha-D-glucose site is built by Q337, H352, W355, S357, E360, D376, and Q377.

Belongs to the UDP-glycosyltransferase family.

The enzyme catalyses (indol-3-yl)acetate + UDP-alpha-D-glucose = 1-O-(indol-3-ylacetyl)-beta-D-glucose + UDP. It functions in the pathway plant hormone metabolism; auxin conjugation. Possesses low catalytic activity in vitro. Also active as glucosyltransferase in vitro on benzoates and benzoate derivatives. This is UDP-glycosyltransferase 75B2 (UGT75B2) from Arabidopsis thaliana (Mouse-ear cress).